The chain runs to 461 residues: Argininosuccinate lyase (461 aa).

The protein belongs to the lyase 1 family. Argininosuccinate lyase subfamily.

It localises to the cytoplasm. It catalyses the reaction 2-(N(omega)-L-arginino)succinate = fumarate + L-arginine. It participates in amino-acid biosynthesis; L-arginine biosynthesis; L-arginine from L-ornithine and carbamoyl phosphate: step 3/3. The sequence is that of Argininosuccinate lyase from Streptococcus thermophilus (strain CNRZ 1066).